Consider the following 187-residue polypeptide: Probable chorismate pyruvate-lyase (187 aa).

Arg-80, Leu-117, and Glu-176 together coordinate substrate.

This sequence belongs to the UbiC family.

It is found in the cytoplasm. It carries out the reaction chorismate = 4-hydroxybenzoate + pyruvate. It functions in the pathway cofactor biosynthesis; ubiquinone biosynthesis. Functionally, removes the pyruvyl group from chorismate, with concomitant aromatization of the ring, to provide 4-hydroxybenzoate (4HB) for the ubiquinone pathway. This Halorhodospira halophila (strain DSM 244 / SL1) (Ectothiorhodospira halophila (strain DSM 244 / SL1)) protein is Probable chorismate pyruvate-lyase.